Consider the following 434-residue polypeptide: Trigger factor (434 aa).

Positions 160 to 245 constitute a PPIase FKBP-type domain; it reads GDKVKMNFVG…LTEVQAANLP (86 aa).

This sequence belongs to the FKBP-type PPIase family. Tig subfamily.

It is found in the cytoplasm. It carries out the reaction [protein]-peptidylproline (omega=180) = [protein]-peptidylproline (omega=0). Its function is as follows. Involved in protein export. Acts as a chaperone by maintaining the newly synthesized protein in an open conformation. Functions as a peptidyl-prolyl cis-trans isomerase. This chain is Trigger factor, found in Shewanella baltica (strain OS223).